We begin with the raw amino-acid sequence, 464 residues long: Glutamate--tRNA ligase 2 (464 aa).

The 'HIGH' region motif lies at 11–21 (PSPTGFLHIGS). The 'KMSKS' region motif lies at 240-244 (KLSKR). Lysine 243 serves as a coordination point for ATP.

The protein belongs to the class-I aminoacyl-tRNA synthetase family. Glutamate--tRNA ligase type 1 subfamily. Monomer.

The protein resides in the cytoplasm. It catalyses the reaction tRNA(Glu) + L-glutamate + ATP = L-glutamyl-tRNA(Glu) + AMP + diphosphate. Catalyzes the attachment of glutamate to tRNA(Glu) in a two-step reaction: glutamate is first activated by ATP to form Glu-AMP and then transferred to the acceptor end of tRNA(Glu). In Rickettsia bellii (strain OSU 85-389), this protein is Glutamate--tRNA ligase 2.